The primary structure comprises 342 residues: Signal-regulatory protein beta-2 (342 aa).

A signal peptide spans 1–32 (MCSTMSAPTCLAHLPPCFLLLALVLVPSDASG). Ig-like V-type domains are found at residues 33–143 (QSSR…KSDE) and 157–258 (PDLW…SGQG). Residues 33-287 (QSSRNDWQVL…EPATEMSPTG (255 aa)) are Extracellular-facing. Cysteine 60 and cysteine 127 are oxidised to a cystine. N-linked (GlcNAc...) asparagine glycans are attached at residues asparagine 116, asparagine 179, and asparagine 231. Cysteine 180 and cysteine 242 are joined by a disulfide. The helical transmembrane segment at 288 to 308 (LLVVFAPVVLGLKAITLAALL) threads the bilayer. Residues 309–342 (LALATSRRSPGQEDVKTTGPAGAMNTLAWSKGQE) lie on the Cytoplasmic side of the membrane. Residues 317–342 (SPGQEDVKTTGPAGAMNTLAWSKGQE) are disordered.

The protein localises to the membrane. This Homo sapiens (Human) protein is Signal-regulatory protein beta-2 (SIRPB2).